The primary structure comprises 447 residues: uncharacterized protein (447 aa).

The protein belongs to the class-II fumarase/aspartase family.

Its subcellular location is the cytoplasm. The protein localises to the nucleus. This is an uncharacterized protein from Schizosaccharomyces pombe (strain 972 / ATCC 24843) (Fission yeast).